A 440-amino-acid chain; its full sequence is Protein CapE (440 aa).

Transmembrane regions (helical) follow at residues 7-27 (VILIINFVTVLFSIFTFIGYL), 31-51 (IGFRVVTISLCITIAMTVYLL), 60-80 (LVYLIYLFLTNFGVFVTNIFL), 102-122 (FSIATFAILTFTILSNFISVF), 141-161 (FYYTGILFIIGFTIQFLFYII), 179-199 (ELPMYTYGIFFFSIGIAFAFS), 204-224 (THIKYLVIILTPQVLFFLITG), 249-269 (WWMIITIVFTLFFVIPFIKVF), 324-344 (IFSYIIPGLQPVNYEMVGYGF), 360-380 (YYNGAIVGVLIVMVLLVLLLW), 382-402 (FTNFKSFEMLSMGTAIVSVLI), and 409-429 (FSFVPAYILIIIVIVIILLFI).

It is found in the cell membrane. It functions in the pathway capsule biogenesis; capsule polysaccharide biosynthesis. Its function is as follows. Required for the biosynthesis of type 1 capsular polysaccharide. In Staphylococcus aureus, this protein is Protein CapE (capE).